Here is an 813-residue protein sequence, read N- to C-terminus: LPS-assembly protein LptD (813 aa).

The signal sequence occupies residues 1 to 22 (MRRALRLLPLPLSIAICLPAMA).

Belongs to the LptD family. In terms of assembly, component of the lipopolysaccharide transport and assembly complex. Interacts with LptE and LptA.

Its subcellular location is the cell outer membrane. Its function is as follows. Together with LptE, is involved in the assembly of lipopolysaccharide (LPS) at the surface of the outer membrane. This Xanthomonas oryzae pv. oryzae (strain KACC10331 / KXO85) protein is LPS-assembly protein LptD.